Consider the following 456-residue polypeptide: tRNA-2-methylthio-N(6)-dimethylallyladenosine synthase (456 aa).

An MTTase N-terminal domain is found at 18-134 (KKLFIETYGC…LPDLVASVEA (117 aa)). Residues cysteine 27, cysteine 63, cysteine 98, cysteine 172, cysteine 176, and cysteine 179 each contribute to the [4Fe-4S] cluster site. Positions 158–390 (CGNHISGFVS…IELQNRLSAE (233 aa)) constitute a Radical SAM core domain. The 64-residue stretch at 393-456 (ARDVGKTFEV…SATLKGEEVF (64 aa)) folds into the TRAM domain.

The protein belongs to the methylthiotransferase family. MiaB subfamily. As to quaternary structure, monomer. Requires [4Fe-4S] cluster as cofactor.

Its subcellular location is the cytoplasm. The enzyme catalyses N(6)-dimethylallyladenosine(37) in tRNA + (sulfur carrier)-SH + AH2 + 2 S-adenosyl-L-methionine = 2-methylsulfanyl-N(6)-dimethylallyladenosine(37) in tRNA + (sulfur carrier)-H + 5'-deoxyadenosine + L-methionine + A + S-adenosyl-L-homocysteine + 2 H(+). Functionally, catalyzes the methylthiolation of N6-(dimethylallyl)adenosine (i(6)A), leading to the formation of 2-methylthio-N6-(dimethylallyl)adenosine (ms(2)i(6)A) at position 37 in tRNAs that read codons beginning with uridine. The sequence is that of tRNA-2-methylthio-N(6)-dimethylallyladenosine synthase from Phocaeicola vulgatus (strain ATCC 8482 / DSM 1447 / JCM 5826 / CCUG 4940 / NBRC 14291 / NCTC 11154) (Bacteroides vulgatus).